We begin with the raw amino-acid sequence, 140 residues long: Fluoride-specific ion channel FluC 1 (140 aa).

The next 4 membrane-spanning stretches (helical) occupy residues 3–23, 38–58, 80–100, and 113–133; these read TGAT…GAAA, APLW…GLVL, ILYP…STVM, and IAGV…ALWC. Na(+)-binding residues include G91 and T94.

The protein belongs to the fluoride channel Fluc/FEX (TC 1.A.43) family.

The protein localises to the cell membrane. The enzyme catalyses fluoride(in) = fluoride(out). Na(+) is not transported, but it plays an essential structural role and its presence is essential for fluoride channel function. Fluoride-specific ion channel. Important for reducing fluoride concentration in the cell, thus reducing its toxicity. The sequence is that of Fluoride-specific ion channel FluC 1 from Corynebacterium jeikeium (strain K411).